A 232-amino-acid polypeptide reads, in one-letter code: Ubiquinone biosynthesis O-methyltransferase (232 aa).

Residues Arg36, Gly55, Asp76, and Leu120 each contribute to the S-adenosyl-L-methionine site.

This sequence belongs to the methyltransferase superfamily. UbiG/COQ3 family.

It catalyses the reaction a 3-demethylubiquinol + S-adenosyl-L-methionine = a ubiquinol + S-adenosyl-L-homocysteine + H(+). It carries out the reaction a 3-(all-trans-polyprenyl)benzene-1,2-diol + S-adenosyl-L-methionine = a 2-methoxy-6-(all-trans-polyprenyl)phenol + S-adenosyl-L-homocysteine + H(+). Its pathway is cofactor biosynthesis; ubiquinone biosynthesis. Its function is as follows. O-methyltransferase that catalyzes the 2 O-methylation steps in the ubiquinone biosynthetic pathway. The chain is Ubiquinone biosynthesis O-methyltransferase from Pseudomonas fluorescens (strain SBW25).